The sequence spans 490 residues: N-succinylglutamate 5-semialdehyde dehydrogenase (490 aa).

223 to 228 (GSAGTG) contributes to the NAD(+) binding site. Residues Glu-246 and Cys-280 contribute to the active site.

Belongs to the aldehyde dehydrogenase family. AstD subfamily.

It catalyses the reaction N-succinyl-L-glutamate 5-semialdehyde + NAD(+) + H2O = N-succinyl-L-glutamate + NADH + 2 H(+). Its pathway is amino-acid degradation; L-arginine degradation via AST pathway; L-glutamate and succinate from L-arginine: step 4/5. Its function is as follows. Catalyzes the NAD-dependent reduction of succinylglutamate semialdehyde into succinylglutamate. The polypeptide is N-succinylglutamate 5-semialdehyde dehydrogenase (Serratia proteamaculans (strain 568)).